The primary structure comprises 158 residues: NADH-quinone oxidoreductase subunit B 2 (158 aa).

Residues Cys-37, Cys-38, Cys-102, and Cys-132 each coordinate [4Fe-4S] cluster.

It belongs to the complex I 20 kDa subunit family. NDH-1 is composed of 14 different subunits. Subunits NuoB, C, D, E, F, and G constitute the peripheral sector of the complex. [4Fe-4S] cluster serves as cofactor.

It localises to the cell inner membrane. The catalysed reaction is a quinone + NADH + 5 H(+)(in) = a quinol + NAD(+) + 4 H(+)(out). NDH-1 shuttles electrons from NADH, via FMN and iron-sulfur (Fe-S) centers, to quinones in the respiratory chain. Couples the redox reaction to proton translocation (for every two electrons transferred, four hydrogen ions are translocated across the cytoplasmic membrane), and thus conserves the redox energy in a proton gradient. The chain is NADH-quinone oxidoreductase subunit B 2 from Acidithiobacillus ferrooxidans (strain ATCC 53993 / BNL-5-31) (Leptospirillum ferrooxidans (ATCC 53993)).